A 191-amino-acid chain; its full sequence is MAVSNIWQSYSSSNLHWIYPLYTNNCSQNVKSSFTAEILLKRRCNDIQDILNDRMIELLLQGACDPNKQQNYLQGMSPSRKKKTHVKKFLKKQKKSRKPITLEHGCLSGPVTLRFGNFAGIRDLRGTRCPLHGIKHGVHPKPGERCACQQATLFPSPLARFSCDQSAVLGCAASSTRVYDSIADEFSSLYF.

Its function is as follows. Not essential for sporulation. This is Sporulation-specific protein (SPR6) from Saccharomyces cerevisiae (strain ATCC 204508 / S288c) (Baker's yeast).